The primary structure comprises 460 residues: tRNA-splicing endonuclease subunit Sen2 (460 aa).

A disordered region spans residues 143 to 215; that stretch reads EKEETPQHEP…SPSSHNGHVA (73 aa). Positions 159-170 are enriched in basic and acidic residues; it reads SSLEGRVEKDEL. Catalysis depends on residues Tyr364 and His372. Ser403, Ser406, and Ser410 each carry phosphoserine. Lys411 is an active-site residue.

The protein belongs to the tRNA-intron endonuclease family. TRNA splicing endonuclease is a heterotetramer composed of TSEN2, TSEN15, TSEN34/LENG5 and TSEN54. tRNA splicing endonuclease complex also contains proteins of the pre-mRNA 3'-end processing machinery such as CLP1, CPSF1, CPSF4 and CSTF2.

Its subcellular location is the nucleus. It is found in the nucleolus. The enzyme catalyses pretRNA = a 3'-half-tRNA molecule with a 5'-OH end + a 5'-half-tRNA molecule with a 2',3'-cyclic phosphate end + an intron with a 2',3'-cyclic phosphate and a 5'-hydroxyl terminus.. Functionally, constitutes one of the two catalytic subunit of the tRNA-splicing endonuclease complex, a complex responsible for identification and cleavage of the splice sites in pre-tRNA. It cleaves pre-tRNA at the 5'- and 3'-splice sites to release the intron. The products are an intron and two tRNA half-molecules bearing 2',3'-cyclic phosphate and 5'-OH termini. There are no conserved sequences at the splice sites, but the intron is invariably located at the same site in the gene, placing the splice sites an invariant distance from the constant structural features of the tRNA body. Probably carries the active site for 5'-splice site cleavage. The tRNA splicing endonuclease is also involved in mRNA processing via its association with pre-mRNA 3'-end processing factors, establishing a link between pre-tRNA splicing and pre-mRNA 3'-end formation, suggesting that the endonuclease subunits function in multiple RNA-processing events. This chain is tRNA-splicing endonuclease subunit Sen2 (Tsen2), found in Mus musculus (Mouse).